The primary structure comprises 567 residues: Proline--tRNA ligase (567 aa).

It belongs to the class-II aminoacyl-tRNA synthetase family. ProS type 1 subfamily. As to quaternary structure, homodimer.

It is found in the cytoplasm. It catalyses the reaction tRNA(Pro) + L-proline + ATP = L-prolyl-tRNA(Pro) + AMP + diphosphate. Its function is as follows. Catalyzes the attachment of proline to tRNA(Pro) in a two-step reaction: proline is first activated by ATP to form Pro-AMP and then transferred to the acceptor end of tRNA(Pro). As ProRS can inadvertently accommodate and process non-cognate amino acids such as alanine and cysteine, to avoid such errors it has two additional distinct editing activities against alanine. One activity is designated as 'pretransfer' editing and involves the tRNA(Pro)-independent hydrolysis of activated Ala-AMP. The other activity is designated 'posttransfer' editing and involves deacylation of mischarged Ala-tRNA(Pro). The misacylated Cys-tRNA(Pro) is not edited by ProRS. This is Proline--tRNA ligase from Streptomyces griseus subsp. griseus (strain JCM 4626 / CBS 651.72 / NBRC 13350 / KCC S-0626 / ISP 5235).